The sequence spans 400 residues: Tryptophan synthase beta chain (400 aa).

Lys92 is subject to N6-(pyridoxal phosphate)lysine.

Belongs to the TrpB family. As to quaternary structure, tetramer of two alpha and two beta chains. Pyridoxal 5'-phosphate serves as cofactor.

It catalyses the reaction (1S,2R)-1-C-(indol-3-yl)glycerol 3-phosphate + L-serine = D-glyceraldehyde 3-phosphate + L-tryptophan + H2O. It functions in the pathway amino-acid biosynthesis; L-tryptophan biosynthesis; L-tryptophan from chorismate: step 5/5. In terms of biological role, the beta subunit is responsible for the synthesis of L-tryptophan from indole and L-serine. The protein is Tryptophan synthase beta chain of Neisseria meningitidis serogroup B (strain ATCC BAA-335 / MC58).